Reading from the N-terminus, the 494-residue chain is WD repeat-containing protein 37 (494 aa).

The interval 1–38 is disordered; it reads MPTESGSWAAARQTKQKRKSHSLSIKRTNSSEQDRPGL. Over residues 22-31 the composition is skewed to polar residues; the sequence is SLSIKRTNSS. WD repeat units follow at residues 154 to 194 and 197 to 236; these read GHRD…CLIK and GHAG…PTPQ. Positions 236–266 are disordered; that stretch reads QPTADTSISGEEEVDFSDKDENDGDGDASSD. Acidic residues predominate over residues 245-263; that stretch reads GEEEVDFSDKDENDGDGDA. WD repeat units follow at residues 279 to 318, 321 to 360, 365 to 403, 406 to 445, and 452 to 493; these read SHQG…LVHS, GHDQ…IHSV, GHTD…SPIA, RTDS…LARL, and GHRR…LLQE.

Its subcellular location is the cytoplasm. It localises to the nucleus. This Xenopus tropicalis (Western clawed frog) protein is WD repeat-containing protein 37 (wdr37).